Consider the following 406-residue polypeptide: MVSVTHCDSLWFGADIITMRGGNYQLIPQGAIAVTGDKIVWIGPHAELPPIHAARQVVYEGGLITPGLIDCHTHLVFGGDRSNEFEQRLNGVSYAEIAANGGGIISTVRATRQASEQQLLEQALFRLKPLLAEGVTTIEIKSGYGLNLESEIKMLRVARRLGELLPIDVKTTCLAAHALPPEFIGQPDDYIDVVCNSIIPQVAVENLADAVDAFCEHLAFSPAQVERVFLAAQKAGLPVKLHAEQLSALRGATLAAKFHAISADHLEYATESDVQAMAKAGTVAVLLPGAYYLLRETQCPPIDLFRQYKVPMALASDANPGTSPVLSLRLMLNMACTLFRMTPEEALAGVTCHAAQALGVQQTQGTLETGKLANWVHWPLSHPAELAYWLGGQLPATVVFRGEVRP.

Residues histidine 72 and histidine 74 each contribute to the Fe(3+) site. Histidine 72 and histidine 74 together coordinate Zn(2+). Arginine 81, tyrosine 144, and histidine 177 together coordinate 4-imidazolone-5-propanoate. Tyrosine 144 contributes to the N-formimidoyl-L-glutamate binding site. Histidine 242 provides a ligand contact to Fe(3+). Histidine 242 contributes to the Zn(2+) binding site. Glutamine 245 provides a ligand contact to 4-imidazolone-5-propanoate. Fe(3+) is bound at residue aspartate 317. Aspartate 317 is a Zn(2+) binding site. N-formimidoyl-L-glutamate is bound by residues asparagine 319 and glycine 321. Threonine 322 contributes to the 4-imidazolone-5-propanoate binding site.

It belongs to the metallo-dependent hydrolases superfamily. HutI family. Requires Zn(2+) as cofactor. Fe(3+) serves as cofactor.

Its subcellular location is the cytoplasm. It catalyses the reaction 4-imidazolone-5-propanoate + H2O = N-formimidoyl-L-glutamate. It functions in the pathway amino-acid degradation; L-histidine degradation into L-glutamate; N-formimidoyl-L-glutamate from L-histidine: step 3/3. In terms of biological role, catalyzes the hydrolytic cleavage of the carbon-nitrogen bond in imidazolone-5-propanoate to yield N-formimidoyl-L-glutamate. It is the third step in the universal histidine degradation pathway. This Yersinia pseudotuberculosis serotype O:1b (strain IP 31758) protein is Imidazolonepropionase.